Consider the following 339-residue polypeptide: MNIFVEFFLVMLKVCWAIVMAGFKWLIRPKEKSVAGQVCVITGAGGGLGRLFAKEFARRRATLVLWDINSHSNEETAEMVRQIYREQDNPMSKEGAVGGVEEVPPFQPQVYTYVLDVGKRESVYSTAEKVRREVGEVDLLINNAGVVSGHHLLECPDELIERTMVVNCHAHFWTTKAFLPKMLEMNHGHIVTVASSLGLFSTAGVEDYCASKFGAIGFHESLSHEIQASEKDGIKMTLVCPYLVDTGMFRGCRIRKEIEPFLPPLRPEFCVKQAMRAILTDQPMICTPRIVYMVNFMKSILPFEAIVCMYRFLGADKCMYPFLAQRKEAMNNNEAKNGI.

A helical; Signal-anchor membrane pass occupies residues 3–23; the sequence is IFVEFFLVMLKVCWAIVMAGF. 40–64 lines the NADP(+) pocket; sequence VITGAGGGLGRLFAKEFARRRATLV. Serine 195 provides a ligand contact to substrate. The active-site Proton acceptor is tyrosine 208.

It belongs to the short-chain dehydrogenases/reductases (SDR) family.

The protein resides in the microsome membrane. The protein localises to the endoplasmic reticulum membrane. It catalyses the reaction all-trans-retinol + NADP(+) = all-trans-retinal + NADPH + H(+). It functions in the pathway cofactor metabolism; retinol metabolism. Retinol dehydrogenase with a clear preference for NADP. Converts all-trans-retinol to all-trans-retinal. Has no detectable activity towards 11-cis-retinol, 9-cis-retinol and 13-cis-retinol. The polypeptide is Retinol dehydrogenase 10-A (rdh10a) (Danio rerio (Zebrafish)).